The chain runs to 249 residues: MIRILVSNDDGVNAPGIKALTEALVEIANVMTVAPDRNCSGASNSLTLTNPLRINRLDNGYISVHGTPTDCVHLAIRELCDGEPDMVVSGINAGANMGDDTLYSGTVAAAMEGRFLGFPAVAISLNGREFKHYQSAAVYARRIVQGLLLHPLASDQILNINVPDLPLDEIKGIRVTRLGARHKAEGIVRTKDPAGREIFWLGPPGLEQDATEGTDFHAVANGYVSITPLTVDLTAYRQLSVLQNWVDKI.

Aspartate 9, aspartate 10, serine 40, and asparagine 92 together coordinate a divalent metal cation.

Belongs to the SurE nucleotidase family. The cofactor is a divalent metal cation.

It is found in the cytoplasm. The catalysed reaction is a ribonucleoside 5'-phosphate + H2O = a ribonucleoside + phosphate. Nucleotidase that shows phosphatase activity on nucleoside 5'-monophosphates. The chain is 5'-nucleotidase SurE from Shewanella putrefaciens (strain CN-32 / ATCC BAA-453).